The chain runs to 247 residues: ATP synthase subunit a, chloroplastic (247 aa).

Helical transmembrane passes span 38 to 58, 95 to 115, 134 to 154, 199 to 219, and 220 to 240; these read QVLI…TIAV, VPFI…GALL, INTT…AGLT, LVVV…VMLL, and GLFT…AYIG.

It belongs to the ATPase A chain family. F-type ATPases have 2 components, CF(1) - the catalytic core - and CF(0) - the membrane proton channel. CF(1) has five subunits: alpha(3), beta(3), gamma(1), delta(1), epsilon(1). CF(0) has four main subunits: a, b, b' and c.

The protein localises to the plastid. It localises to the chloroplast thylakoid membrane. Functionally, key component of the proton channel; it plays a direct role in the translocation of protons across the membrane. The protein is ATP synthase subunit a, chloroplastic of Solanum lycopersicum (Tomato).